The following is a 299-amino-acid chain: MAEEQARHVKNGLECIRALKAEPIGSLAVEEAMAAWSEISDNPGQDRATCKEEEAGSSGLSKPCLSAIGSTEGGAPRIRGQGSGESDDDAETLGIPSRNLQASSTGLQCYHVYDHSGEAVKGIQDADSIMVQSGLDGDSTLSGGDDESENSDVDIGEPDTEGYAITDRGSAPISMGFRASDVETAEGGEIHELLKLQSRGNNFPKLGKTLNVPPPPNPSRASTSETPIKKGHRREIGLIWNGDRVFIDRWCNPMCSKVTLGTIRARCTCGECPRVCEQCRTDTGVDTRIWYHNLPEIPE.

The interval 40 to 94 is disordered; the sequence is SDNPGQDRATCKEEEAGSSGLSKPCLSAIGSTEGGAPRIRGQGSGESDDDAETLG. An interaction with host STAT1 region spans residues 110-120; the sequence is YHVYDHSGEAV. Low complexity predominate over residues 133–143; it reads SGLDGDSTLSG. 2 disordered regions span residues 133-168 and 204-229; these read SGLDGDSTLSGGDDESENSDVDIGEPDTEGYAITDR and PKLGKTLNVPPPPNPSRASTSETPIK. The span at 144–160 shows a compositional bias: acidic residues; it reads GDDESENSDVDIGEPDT. Residues H232, C251, C255, C267, C269, C272, C276, and C279 each coordinate Zn(2+).

Belongs to the paramyxoviruses V protein family. As to quaternary structure, interacts with host IFIH1/MDA5 and DHX58/LGP2; these interactions are involved in the inhibition of the host type I interferon signaling pathway. Interacts with host TYK2; this interaction inhibits the type I interferon signaling pathway without affecting the type II pathway. Interacts with host IRF7; this interaction inhibits IRF7 translocation to the nucleus. Interacts with host CHUK. Interacts with host RELA/p65; this interaction inhibits the nuclear translocation of NF-KappaB. Interacts (via N-terminus) with host STAT1 and JAK1; these interactions inhibit STAT1 phosphorylation by Jak1 and thereby the type I interferon signaling pathway. Interacts (via C-terminus) with host STAT2; this interaction is involved in the inhibition of the host type I interferon signaling pathway. Forms a complex with host PPP1CA and PPP1CC; this interaction prevents dephosphorylation of host IFIH1/MDA5 and leads to the inhibition of the host type I interferon signaling pathway. Interacts with host IRF9; this interaction prevents the binding of IRF9 to STAT2 and thereby the type I interferon signaling pathway. Interacts with host RIGI regulatory protein (via CARDs domain) and host TRIM25 (via SPRY domain); these interactions prevent TRIM25-mediated ubiquitination of RIG-I and disrupts downstream RIG-I signaling.

It is found in the host cytoplasm. Functionally, plays an essential role in the inhibition of host immune response. Prevents the establishment of cellular antiviral state by blocking interferon-alpha/beta (IFN-alpha/beta) production and signaling pathway. Interacts with host IFIH1/MDA5 and DHX58/LGP2 to inhibit the transduction pathway involved in the activation of IFN-beta promoter, thus protecting the virus against cell antiviral state. Blocks the type I interferon signaling pathway by interacting with host TYK2 and thereby inhibiting downstream STAT1 and STAT2 phosphorylation. Blocks the type I interferon signaling pathway by disrupting the RIG-I signaling pathway. Moderately affects the type II interferon signaling. Prevents PP1alpha/gamma-mediated dephosphorylation of host IFIH1/MDA5 and thus blocks its activation. The protein is Non-structural protein V (P/V) of Homo sapiens (Human).